The chain runs to 495 residues: MDSKRAALESGDGPDAKRLDTTDDQDKEASGGDGSQVMLAKHVAPYTGHGCTPPMESYLFEPTPAGSQLLPWKTSVDLDNDAELEKPTSDKKPDTAKLSRRELAKMRREHTLRALALERELTNKPGQTPASEVLLVRFPDPEITAPMLAGLSKDIRDVVLPISVAPRYCLVHLKAGADVEATICDINRVRFGTGHLRAELKPFSDEEQAEFIDPCSLYVGNIPFNMTTSAIKAYFANAMRVDIGVLKREKRARYAFVRYASPDQTMEAFKELVDSPLNSRTLTVRYRRLRKRAGMPMVQCATSFQALQSPNGDDDNTDCKVISPPPLESIIISDSDNCSDSSGNGKEDGKRKKKINEQEREIEKLKRQMAEYGAIIKSLQFRQNSLEDTFIPDLTPKVEPSVNPTGCLLGSNAVHLMRDIKKECDYLGIPDPVPATKPTTQAQDDSQKKAKRSCFGRLFTGPFRRGTSAMKTADEYEKDDRLEELYAQLERDPDP.

The disordered stretch occupies residues 1–51 (MDSKRAALESGDGPDAKRLDTTDDQDKEASGGDGSQVMLAKHVAPYTGHGC). Positions 215 to 289 (CSLYVGNIPF…RTLTVRYRRL (75 aa)) constitute an RRM domain. Positions 332–342 (ISDSDNCSDSS) are enriched in low complexity. 3 disordered regions span residues 332 to 358 (ISDS…INEQ), 432 to 451 (PVPA…KKAK), and 461 to 495 (GPFR…DPDP). Basic and acidic residues predominate over residues 345–358 (GKEDGKRKKKINEQ). Residues 351-367 (RKKKINEQEREIEKLKR) carry the Bipartite nuclear localization signal motif. Basic and acidic residues predominate over residues 472 to 495 (TADEYEKDDRLEELYAQLERDPDP).

Interacts with Zeste. As to expression, weakly expressed in embryos. Expression increases during larval and pupal stages. In adults, it is predominantly expressed in males, while it is weakly expressed in females.

It is found in the nucleus. Its subcellular location is the chromosome. Its function is as follows. Probable RNA-binding protein that specifically binds to the fourth chromosome and may bind an RNA that spreads the fourth chromosome. May be a reminiscence of X chromosome dosage compensation of ancestral Drosophila species in which the X and the fourth chromosomes are one single chromosome. The protein is Protein painting of fourth (Pof) of Drosophila melanogaster (Fruit fly).